The chain runs to 118 residues: uncharacterized protein (118 aa).

The protein to M.jannaschii MJ0310 and MJ1340.

This is an uncharacterized protein from Methanocaldococcus jannaschii (strain ATCC 43067 / DSM 2661 / JAL-1 / JCM 10045 / NBRC 100440) (Methanococcus jannaschii).